A 186-amino-acid chain; its full sequence is UPF0301 protein Daro_3893 (186 aa).

The protein belongs to the UPF0301 (AlgH) family.

The protein is UPF0301 protein Daro_3893 of Dechloromonas aromatica (strain RCB).